A 651-amino-acid polypeptide reads, in one-letter code: DNA ligase (651 aa).

NAD(+)-binding positions include 32–36 (DAEYD), 75–76 (SL), and glutamate 106. Lysine 108 (N6-AMP-lysine intermediate) is an active-site residue. Positions 129, 164, 271, and 295 each coordinate NAD(+). Positions 389, 392, 405, and 411 each coordinate Zn(2+). Residues 575 to 651 (SSDSFLNNKI…LDEEQWNRLC (77 aa)) enclose the BRCT domain.

The protein belongs to the NAD-dependent DNA ligase family. LigA subfamily. Requires Mg(2+) as cofactor. The cofactor is Mn(2+).

The catalysed reaction is NAD(+) + (deoxyribonucleotide)n-3'-hydroxyl + 5'-phospho-(deoxyribonucleotide)m = (deoxyribonucleotide)n+m + AMP + beta-nicotinamide D-nucleotide.. Functionally, DNA ligase that catalyzes the formation of phosphodiester linkages between 5'-phosphoryl and 3'-hydroxyl groups in double-stranded DNA using NAD as a coenzyme and as the energy source for the reaction. It is essential for DNA replication and repair of damaged DNA. The polypeptide is DNA ligase (Wolbachia pipientis subsp. Culex pipiens (strain wPip)).